Here is a 100-residue protein sequence, read N- to C-terminus: Urease subunit gamma (100 aa).

Belongs to the urease gamma subunit family. In terms of assembly, heterotrimer of UreA (gamma), UreB (beta) and UreC (alpha) subunits. Three heterotrimers associate to form the active enzyme.

The protein resides in the cytoplasm. The enzyme catalyses urea + 2 H2O + H(+) = hydrogencarbonate + 2 NH4(+). It functions in the pathway nitrogen metabolism; urea degradation; CO(2) and NH(3) from urea (urease route): step 1/1. The polypeptide is Urease subunit gamma (Saccharophagus degradans (strain 2-40 / ATCC 43961 / DSM 17024)).